The following is a 453-amino-acid chain: Chromosomal replication initiator protein DnaA (453 aa).

The domain I, interacts with DnaA modulators stretch occupies residues 1–79 (MKSLIQEKWN…KTAIAEVINQ (79 aa)). The domain II stretch occupies residues 79 to 111 (QDFEIEFVLLSQTKAEEKVQTQAPNKIKNESLS). Positions 112 to 330 (YLNPRYTFDT…GALTKIVALS (219 aa)) are domain III, AAA+ region. The ATP site is built by G156, G158, K159, and T160. A domain IV, binds dsDNA region spans residues 331 to 453 (RLKKKEVDVI…VLIKKINPTP (123 aa)).

This sequence belongs to the DnaA family. In terms of assembly, oligomerizes as a right-handed, spiral filament on DNA at oriC.

It is found in the cytoplasm. Functionally, plays an essential role in the initiation and regulation of chromosomal replication. ATP-DnaA binds to the origin of replication (oriC) to initiate formation of the DNA replication initiation complex once per cell cycle. Binds the DnaA box (a 9 base pair repeat at the origin) and separates the double-stranded (ds)DNA. Forms a right-handed helical filament on oriC DNA; dsDNA binds to the exterior of the filament while single-stranded (ss)DNA is stabiized in the filament's interior. The ATP-DnaA-oriC complex binds and stabilizes one strand of the AT-rich DNA unwinding element (DUE), permitting loading of DNA polymerase. After initiation quickly degrades to an ADP-DnaA complex that is not apt for DNA replication. Binds acidic phospholipids. The protein is Chromosomal replication initiator protein DnaA of Lachnoclostridium phytofermentans (strain ATCC 700394 / DSM 18823 / ISDg) (Clostridium phytofermentans).